Consider the following 209-residue polypeptide: Ribosomal RNA large subunit methyltransferase E (209 aa).

Residues Gly63, Trp65, Asp83, Asp99, and Asp124 each coordinate S-adenosyl-L-methionine. Lys164 serves as the catalytic Proton acceptor.

It belongs to the class I-like SAM-binding methyltransferase superfamily. RNA methyltransferase RlmE family.

It is found in the cytoplasm. The catalysed reaction is uridine(2552) in 23S rRNA + S-adenosyl-L-methionine = 2'-O-methyluridine(2552) in 23S rRNA + S-adenosyl-L-homocysteine + H(+). Specifically methylates the uridine in position 2552 of 23S rRNA at the 2'-O position of the ribose in the fully assembled 50S ribosomal subunit. The protein is Ribosomal RNA large subunit methyltransferase E of Shewanella sp. (strain ANA-3).